Reading from the N-terminus, the 469-residue chain is Bifunctional protein GlmU (469 aa).

A pyrophosphorylase region spans residues 1 to 236 (MLNIKLNIVI…ISEINGINDC (236 aa)). UDP-N-acetyl-alpha-D-glucosamine contacts are provided by residues 11 to 14 (LAAG), lysine 25, glutamine 83, 88 to 89 (GT), 110 to 112 (YGD), glycine 147, glutamate 161, asparagine 176, and asparagine 234. Residue aspartate 112 coordinates Mg(2+). Asparagine 234 is a Mg(2+) binding site. The linker stretch occupies residues 237–257 (AQLANLERLYQKEQAESLLRI). Residues 258 to 469 (GVIIADPNRF…KKKIRYNIIY (212 aa)) are N-acetyltransferase. UDP-N-acetyl-alpha-D-glucosamine is bound by residues arginine 340 and lysine 358. The active-site Proton acceptor is histidine 370. The UDP-N-acetyl-alpha-D-glucosamine site is built by tyrosine 373 and asparagine 384. Residues alanine 387, 393–394 (NY), serine 412, alanine 430, and arginine 447 contribute to the acetyl-CoA site.

It in the N-terminal section; belongs to the N-acetylglucosamine-1-phosphate uridyltransferase family. In the C-terminal section; belongs to the transferase hexapeptide repeat family. In terms of assembly, homotrimer. Mg(2+) serves as cofactor.

The protein localises to the cytoplasm. The catalysed reaction is alpha-D-glucosamine 1-phosphate + acetyl-CoA = N-acetyl-alpha-D-glucosamine 1-phosphate + CoA + H(+). The enzyme catalyses N-acetyl-alpha-D-glucosamine 1-phosphate + UTP + H(+) = UDP-N-acetyl-alpha-D-glucosamine + diphosphate. It participates in nucleotide-sugar biosynthesis; UDP-N-acetyl-alpha-D-glucosamine biosynthesis; N-acetyl-alpha-D-glucosamine 1-phosphate from alpha-D-glucosamine 6-phosphate (route II): step 2/2. Its pathway is nucleotide-sugar biosynthesis; UDP-N-acetyl-alpha-D-glucosamine biosynthesis; UDP-N-acetyl-alpha-D-glucosamine from N-acetyl-alpha-D-glucosamine 1-phosphate: step 1/1. The protein operates within bacterial outer membrane biogenesis; LPS lipid A biosynthesis. Functionally, catalyzes the last two sequential reactions in the de novo biosynthetic pathway for UDP-N-acetylglucosamine (UDP-GlcNAc). The C-terminal domain catalyzes the transfer of acetyl group from acetyl coenzyme A to glucosamine-1-phosphate (GlcN-1-P) to produce N-acetylglucosamine-1-phosphate (GlcNAc-1-P), which is converted into UDP-GlcNAc by the transfer of uridine 5-monophosphate (from uridine 5-triphosphate), a reaction catalyzed by the N-terminal domain. This Baumannia cicadellinicola subsp. Homalodisca coagulata protein is Bifunctional protein GlmU.